The primary structure comprises 440 residues: Thymidine phosphorylase (440 aa).

The protein belongs to the thymidine/pyrimidine-nucleoside phosphorylase family. As to quaternary structure, homodimer.

It carries out the reaction thymidine + phosphate = 2-deoxy-alpha-D-ribose 1-phosphate + thymine. It functions in the pathway pyrimidine metabolism; dTMP biosynthesis via salvage pathway; dTMP from thymine: step 1/2. Its function is as follows. The enzymes which catalyze the reversible phosphorolysis of pyrimidine nucleosides are involved in the degradation of these compounds and in their utilization as carbon and energy sources, or in the rescue of pyrimidine bases for nucleotide synthesis. The protein is Thymidine phosphorylase of Yersinia enterocolitica serotype O:8 / biotype 1B (strain NCTC 13174 / 8081).